The primary structure comprises 511 residues: ATP synthase subunit beta, mitochondrial (511 aa).

The N-terminal 33 residues, 1–33 (MVLPRLYTATSRAAFKAAKQSAPLLSTSWKRCM), are a transit peptide targeting the mitochondrion. At T112 the chain carries Phosphothreonine. An ATP-binding site is contributed by 190–197 (GGAGVGKT). A Phosphothreonine modification is found at T237. S373 is subject to Phosphoserine.

This sequence belongs to the ATPase alpha/beta chains family. In terms of assembly, F-type ATPases have 2 components, CF(1) - the catalytic core - and CF(0) - the membrane proton channel. CF(1) has five subunits: alpha(3), beta(3), gamma(1), delta(1), epsilon(1). CF(0) has three main subunits: a, b and c.

The protein localises to the mitochondrion. It localises to the mitochondrion inner membrane. It carries out the reaction ATP + H2O + 4 H(+)(in) = ADP + phosphate + 5 H(+)(out). Mitochondrial membrane ATP synthase (F(1)F(0) ATP synthase or Complex V) produces ATP from ADP in the presence of a proton gradient across the membrane which is generated by electron transport complexes of the respiratory chain. F-type ATPases consist of two structural domains, F(1) - containing the extramembraneous catalytic core, and F(0) - containing the membrane proton channel, linked together by a central stalk and a peripheral stalk. During catalysis, ATP synthesis in the catalytic domain of F(1) is coupled via a rotary mechanism of the central stalk subunits to proton translocation. Subunits alpha and beta form the catalytic core in F(1). Rotation of the central stalk against the surrounding alpha(3)beta(3) subunits leads to hydrolysis of ATP in three separate catalytic sites on the beta subunits. This Saccharomyces cerevisiae (strain ATCC 204508 / S288c) (Baker's yeast) protein is ATP synthase subunit beta, mitochondrial (ATP2).